We begin with the raw amino-acid sequence, 142 residues long: Hemoglobin subunit alpha-A (142 aa).

In terms of domain architecture, Globin spans 2–142 (VLSAADKNNV…VGTVLTAKYR (141 aa)). His59 is a binding site for O2. His88 contributes to the heme b binding site.

The protein belongs to the globin family. Heterotetramer of two alpha chains and two beta chains. As to expression, red blood cells.

Functionally, involved in oxygen transport from the lung to the various peripheral tissues. This is Hemoglobin subunit alpha-A (HBAA) from Gallus gallus (Chicken).